The sequence spans 325 residues: H-2 class I histocompatibility antigen, Q10 alpha chain (325 aa).

A signal peptide spans 1–24; the sequence is MGAMAPRTLLLLLAAALAPTQTQA. The segment at 25–114 is alpha-1; the sequence is GSHSMRYFET…LLGYYNQSES (90 aa). Over 25–310 the chain is Extracellular; the sequence is GSHSMRYFET…PPSTDSIMSH (286 aa). Asn110 carries an N-linked (GlcNAc...) asparagine glycan. The interval 115–206 is alpha-2; the sequence is GSHTIQWMYG…ELGKETLLRT (92 aa). Intrachain disulfides connect Cys125-Cys188 and Cys227-Cys283. The alpha-3 stretch occupies residues 207-298; sequence DPPKTHVTHH…GLPEPLTLRW (92 aa). Positions 209–297 constitute an Ig-like C1-type domain; that stretch reads PKTHVTHHPG…EGLPEPLTLR (89 aa). Residue Asn280 is glycosylated (N-linked (GlcNAc...) asparagine). The tract at residues 299–310 is connecting peptide; the sequence is EPPPSTDSIMSH. Residues 311–324 form a helical membrane-spanning segment; that stretch reads IADLLWPSLKLWWY.

It belongs to the MHC class I family. As to quaternary structure, heterodimer of an alpha chain and a beta chain (beta-2-microglobulin).

The protein resides in the membrane. Functionally, involved in the presentation of foreign antigens to the immune system. The sequence is that of H-2 class I histocompatibility antigen, Q10 alpha chain (H2-Q10) from Mus musculus (Mouse).